The chain runs to 377 residues: tRNA-specific 2-thiouridylase MnmA (377 aa).

Residues 17-24 (GMSGGVDS) and methionine 43 each bind ATP. The segment at 103–105 (NPD) is interaction with target base in tRNA. Cysteine 108 serves as the catalytic Nucleophile. Cysteine 108 and cysteine 204 are oxidised to a cystine. Glycine 132 provides a ligand contact to ATP. The interaction with tRNA stretch occupies residues 154–156 (KDQ). Cysteine 204 functions as the Cysteine persulfide intermediate in the catalytic mechanism. Residues 316-317 (RY) are interaction with tRNA.

This sequence belongs to the MnmA/TRMU family.

It localises to the cytoplasm. The catalysed reaction is S-sulfanyl-L-cysteinyl-[protein] + uridine(34) in tRNA + AH2 + ATP = 2-thiouridine(34) in tRNA + L-cysteinyl-[protein] + A + AMP + diphosphate + H(+). Catalyzes the 2-thiolation of uridine at the wobble position (U34) of tRNA, leading to the formation of s(2)U34. This Pseudomonas fluorescens (strain ATCC BAA-477 / NRRL B-23932 / Pf-5) protein is tRNA-specific 2-thiouridylase MnmA.